The chain runs to 131 residues: UPF0102 protein YraN (131 aa).

Polar residues predominate over residues 1–19; sequence MATVPTRSGSPRQLTTKQT. The interval 1–20 is disordered; sequence MATVPTRSGSPRQLTTKQTG.

Belongs to the UPF0102 family.

The sequence is that of UPF0102 protein YraN from Escherichia coli (strain 55989 / EAEC).